Here is a 424-residue protein sequence, read N- to C-terminus: Serine--tRNA ligase (424 aa).

Threonine 232 to glutamate 234 serves as a coordination point for L-serine. ATP is bound at residue arginine 263 to glutamate 265. Glutamate 286 is a binding site for L-serine. An ATP-binding site is contributed by glutamate 350–serine 353. Serine 385 lines the L-serine pocket.

Belongs to the class-II aminoacyl-tRNA synthetase family. Type-1 seryl-tRNA synthetase subfamily. As to quaternary structure, homodimer. The tRNA molecule binds across the dimer.

The protein resides in the cytoplasm. It catalyses the reaction tRNA(Ser) + L-serine + ATP = L-seryl-tRNA(Ser) + AMP + diphosphate + H(+). The catalysed reaction is tRNA(Sec) + L-serine + ATP = L-seryl-tRNA(Sec) + AMP + diphosphate + H(+). The protein operates within aminoacyl-tRNA biosynthesis; selenocysteinyl-tRNA(Sec) biosynthesis; L-seryl-tRNA(Sec) from L-serine and tRNA(Sec): step 1/1. In terms of biological role, catalyzes the attachment of serine to tRNA(Ser). Is also able to aminoacylate tRNA(Sec) with serine, to form the misacylated tRNA L-seryl-tRNA(Sec), which will be further converted into selenocysteinyl-tRNA(Sec). This is Serine--tRNA ligase from Latilactobacillus sakei subsp. sakei (strain 23K) (Lactobacillus sakei subsp. sakei).